Consider the following 854-residue polypeptide: Probable inorganic carbon transporter subunit DabA (854 aa).

Residues C378, D380, H560, and C575 each contribute to the Zn(2+) site.

It belongs to the inorganic carbon transporter (TC 9.A.2) DabA family. As to quaternary structure, forms a complex with DabB. Requires Zn(2+) as cofactor.

The protein localises to the cell membrane. Part of an energy-coupled inorganic carbon pump. The sequence is that of Probable inorganic carbon transporter subunit DabA from Bacillus cereus (strain ATCC 14579 / DSM 31 / CCUG 7414 / JCM 2152 / NBRC 15305 / NCIMB 9373 / NCTC 2599 / NRRL B-3711).